We begin with the raw amino-acid sequence, 209 residues long: Redox-sensing transcriptional repressor Rex (209 aa).

Residues 16–55 (LYYRFIQNLSLSGKQRVSSAELSEAVKVDSATIRRDFSYF) constitute a DNA-binding region (H-T-H motif). 90–95 (GVGNLG) contributes to the NAD(+) binding site.

The protein belongs to the transcriptional regulatory Rex family. In terms of assembly, homodimer.

Its subcellular location is the cytoplasm. Functionally, modulates transcription in response to changes in cellular NADH/NAD(+) redox state. The chain is Redox-sensing transcriptional repressor Rex from Bacillus cereus (strain Q1).